Reading from the N-terminus, the 264-residue chain is Vacuolar protein sorting-associated protein 75 (264 aa).

The residue at position 3 (Ser3) is a Phosphoserine. The disordered stretch occupies residues 223–264 (LEDEEGESGLSADGDSEDDDGSLGEVDLPLSDEEPSSKKRKV).

This sequence belongs to the nucleosome assembly protein (NAP) family. As to quaternary structure, homodimer. Homotetramer. Forms a complex with RTT109; consisting of a VPS75 dimer contacted by two RTT109 subunits. Interacts with RTT109; the interaction is direct. Interacts with ASF1. Interacts with histone H3/H4 heterodimers and heterotetramers via histone H3.

The protein resides in the nucleus. Its function is as follows. Histone chaperone which acts as a cofactor stimulating histone H3 acetylation by RTT109. Preferentially stimulates histone H3 'Lys-9' acetylation by RTT109. May also stimulate histone H3 'Lys-56' acetylation by RTT109. Assembles nucleosomes (in vitro). In Saccharomyces cerevisiae (strain ATCC 204508 / S288c) (Baker's yeast), this protein is Vacuolar protein sorting-associated protein 75 (VPS75).